Reading from the N-terminus, the 350-residue chain is Renin receptor (350 aa).

The signal sequence occupies residues 1 to 17 (MAVLVVLLFFLVAGALG). At 18 to 302 (NEFSILRSPG…YNLAYKYNLE (285 aa)) the chain is on the extracellular side. Residues 303–323 (YSVVFNLVLWIMIGLALAVII) traverse the membrane as a helical segment. Residues 324–350 (TSYNIWNMDPGYDSIIYRMTNQKIRID) lie on the Cytoplasmic side of the membrane. The Mediates retrograde transport to the ER signature appears at 346 to 350 (KIRID).

As to quaternary structure, interacts with renin. Accessory component of the multisubunit proton-transporting vacuolar (V)-ATPase protein pump. Interacts (via N-terminus) with ATP6AP1 (via N-terminus). Interacts with ATP6V0D1; ATP6V0D1 is a V-ATPase complex subunit and the interaction promotes V-ATPase complex assembly. Interacts with TMEM9; TMEM9 is a V-ATPase assembly regulator and the interaction induces the interaction with ATP6V0D1. Interacts with VMA21 (via N-terminus); VMA21 is a V-ATPase accessory component. Phosphorylated. In terms of processing, proteolytically cleaved by a furin-like convertase in the trans-Golgi network to generate N- and C-terminal fragments. In terms of tissue distribution, expressed in glutamatergic and GABAergic neurons with highest levels in the cortex, the hippocampus, the medial habenular nucleus, the cerebellum, the medulla and the olfactory bulb (at protein level).

The protein localises to the endoplasmic reticulum membrane. The protein resides in the lysosome membrane. It localises to the cytoplasmic vesicle. Its subcellular location is the autophagosome membrane. It is found in the cell projection. The protein localises to the dendritic spine membrane. The protein resides in the axon. It localises to the endosome membrane. Its subcellular location is the clathrin-coated vesicle membrane. It is found in the secretory vesicle. The protein localises to the synaptic vesicle membrane. In terms of biological role, multifunctional protein which functions as a renin, prorenin cellular receptor and is involved in the assembly of the lysosomal proton-transporting V-type ATPase (V-ATPase) and the acidification of the endo-lysosomal system. May mediate renin-dependent cellular responses by activating ERK1 and ERK2. By increasing the catalytic efficiency of renin in AGT/angiotensinogen conversion to angiotensin I, may also play a role in the renin-angiotensin system (RAS). Through its function in V-type ATPase (v-ATPase) assembly and acidification of the lysosome it regulates protein degradation and may control different signaling pathways important for proper brain development, synapse morphology and synaptic transmission. The sequence is that of Renin receptor from Mus musculus (Mouse).